A 250-amino-acid chain; its full sequence is Small ribosomal subunit protein uS3 (250 aa).

A KH type-2 domain is found at 16-85 (IDEYLEKELE…NPQIEVKEVS (70 aa)).

The protein belongs to the universal ribosomal protein uS3 family. In terms of assembly, part of the 30S ribosomal subunit.

Binds the lower part of the 30S subunit head. The protein is Small ribosomal subunit protein uS3 of Methanobrevibacter smithii (strain ATCC 35061 / DSM 861 / OCM 144 / PS).